The following is a 232-amino-acid chain: Phosphatidylserine decarboxylase proenzyme (232 aa).

The active-site Schiff-base intermediate with substrate; via pyruvic acid is S190. S190 is subject to Pyruvic acid (Ser); by autocatalysis.

It belongs to the phosphatidylserine decarboxylase family. PSD-A subfamily. Heterodimer of a large membrane-associated beta subunit and a small pyruvoyl-containing alpha subunit. Pyruvate serves as cofactor. In terms of processing, is synthesized initially as an inactive proenzyme. Formation of the active enzyme involves a self-maturation process in which the active site pyruvoyl group is generated from an internal serine residue via an autocatalytic post-translational modification. Two non-identical subunits are generated from the proenzyme in this reaction, and the pyruvate is formed at the N-terminus of the alpha chain, which is derived from the carboxyl end of the proenzyme. The post-translation cleavage follows an unusual pathway, termed non-hydrolytic serinolysis, in which the side chain hydroxyl group of the serine supplies its oxygen atom to form the C-terminus of the beta chain, while the remainder of the serine residue undergoes an oxidative deamination to produce ammonia and the pyruvoyl prosthetic group on the alpha chain.

Its subcellular location is the cell membrane. It carries out the reaction a 1,2-diacyl-sn-glycero-3-phospho-L-serine + H(+) = a 1,2-diacyl-sn-glycero-3-phosphoethanolamine + CO2. It participates in phospholipid metabolism; phosphatidylethanolamine biosynthesis; phosphatidylethanolamine from CDP-diacylglycerol: step 2/2. Catalyzes the formation of phosphatidylethanolamine (PtdEtn) from phosphatidylserine (PtdSer). In Methylocella silvestris (strain DSM 15510 / CIP 108128 / LMG 27833 / NCIMB 13906 / BL2), this protein is Phosphatidylserine decarboxylase proenzyme.